A 130-amino-acid polypeptide reads, in one-letter code: Small ribosomal subunit protein uS9 (130 aa).

Residues 99 to 130 (KSAGMLTRDPRMKERKKPGLKKARKASQFSKR) form a disordered region. Residues 111-130 (KERKKPGLKKARKASQFSKR) show a composition bias toward basic residues.

The protein belongs to the universal ribosomal protein uS9 family.

This is Small ribosomal subunit protein uS9 from Latilactobacillus sakei subsp. sakei (strain 23K) (Lactobacillus sakei subsp. sakei).